The sequence spans 204 residues: Guanylate kinase (204 aa).

The region spanning 3-181 (GTLIIITAPS…ALDDLVAVVR (179 aa)) is the Guanylate kinase-like domain. 10-17 (APSGAGKT) is a binding site for ATP.

This sequence belongs to the guanylate kinase family.

The protein resides in the cytoplasm. It catalyses the reaction GMP + ATP = GDP + ADP. Its function is as follows. Essential for recycling GMP and indirectly, cGMP. The sequence is that of Guanylate kinase from Aromatoleum aromaticum (strain DSM 19018 / LMG 30748 / EbN1) (Azoarcus sp. (strain EbN1)).